The chain runs to 895 residues: DNA mismatch repair protein MutS (895 aa).

632 to 639 (GPNMAGKS) lines the ATP pocket. A disordered region spans residues 824–849 (VTQDKKQVKKQTKNNHSARSGSRQQQ). The segment covering 837-849 (NNHSARSGSRQQQ) has biased composition (polar residues).

This sequence belongs to the DNA mismatch repair MutS family.

In terms of biological role, this protein is involved in the repair of mismatches in DNA. It is possible that it carries out the mismatch recognition step. This protein has a weak ATPase activity. The protein is DNA mismatch repair protein MutS of Desulforapulum autotrophicum (strain ATCC 43914 / DSM 3382 / VKM B-1955 / HRM2) (Desulfobacterium autotrophicum).